The primary structure comprises 210 residues: Glutathione S-transferase P (210 aa).

Residues 2–81 (PPYTVVYFPV…HLGRTLGLYG (80 aa)) form the GST N-terminal domain. Tyr-4 carries the post-translational modification Phosphotyrosine; by EGFR. Residues Tyr-8, Arg-14, Trp-39, Lys-45, and 52 to 53 (QL) each bind glutathione. Thr-62 is subject to Phosphothreonine. Residue 65-66 (QS) coordinates glutathione. Residues 83 to 204 (DQREAALVDM…ASPEHVNLPI (122 aa)) form the GST C-terminal domain. N6-succinyllysine occurs at positions 103 and 116. Lys-128 carries the N6-acetyllysine modification.

The protein belongs to the GST superfamily. Pi family. Homodimer. Interacts with CDK5.

The protein resides in the cytoplasm. Its subcellular location is the mitochondrion. The protein localises to the nucleus. The enzyme catalyses RX + glutathione = an S-substituted glutathione + a halide anion + H(+). It carries out the reaction prostaglandin J2 + glutathione = prostaglandin J2-S-(R)-glutathione. It catalyses the reaction prostaglandin J2 + glutathione = prostaglandin J2-S-(S)-glutathione. The catalysed reaction is prostaglandin A2 + glutathione = prostaglandin A2-S-(S)-glutathione. The enzyme catalyses 11(S)-hydroxy-14(S),15(S)-epoxy-(5Z,8Z,12E)-eicosatrienoate + glutathione = (11S,15S)-dihydroxy-14(R)-S-glutathionyl-(5Z,8Z,12E)-eicosatrienoate. In terms of biological role, conjugation of reduced glutathione to a wide number of exogenous and endogenous hydrophobic electrophiles. Involved in the formation of glutathione conjugates of both prostaglandin A2 (PGA2) and prostaglandin J2 (PGJ2). Participates in the formation of novel hepoxilin regioisomers. Negatively regulates CDK5 activity via p25/p35 translocation to prevent neurodegeneration. The protein is Glutathione S-transferase P (GSTP1) of Pongo abelii (Sumatran orangutan).